A 265-amino-acid chain; its full sequence is uncharacterized protein (265 aa).

Ser223 is modified (phosphoserine).

This is an uncharacterized protein from Saccharomyces cerevisiae (strain ATCC 204508 / S288c) (Baker's yeast).